The chain runs to 153 residues: Myoglobin (153 aa).

The 147-residue stretch at 1 to 147 folds into the Globin domain; sequence MATACVKSLE…FSDECLDHLK (147 aa). A heme b-binding site is contributed by His-94.

The protein belongs to the globin family. Homodimer; disulfide-linked. Post-translationally, the N-terminus is blocked. In terms of tissue distribution, body wall globin is localized in cellular compartments belonging to the hypodermis, the dorsal, ventral and lateral cords, the nerve ring, and body wall muscle.

It localises to the cytoplasm. Functionally, high oxygen affinity. Probably supplies oxygen needed for muscle activity. This chain is Myoglobin, found in Ascaris suum (Pig roundworm).